The primary structure comprises 346 residues: Uroporphyrinogen decarboxylase (346 aa).

Residues 21 to 25 (RQAGR), Phe-40, Asp-71, Tyr-146, Ser-201, and His-316 contribute to the substrate site.

This sequence belongs to the uroporphyrinogen decarboxylase family. As to quaternary structure, homodimer.

The protein localises to the cytoplasm. It carries out the reaction uroporphyrinogen III + 4 H(+) = coproporphyrinogen III + 4 CO2. It functions in the pathway porphyrin-containing compound metabolism; protoporphyrin-IX biosynthesis; coproporphyrinogen-III from 5-aminolevulinate: step 4/4. Functionally, catalyzes the decarboxylation of four acetate groups of uroporphyrinogen-III to yield coproporphyrinogen-III. The chain is Uroporphyrinogen decarboxylase from Rickettsia felis (strain ATCC VR-1525 / URRWXCal2) (Rickettsia azadi).